A 262-amino-acid polypeptide reads, in one-letter code: Diphthine synthase (262 aa).

S-adenosyl-L-methionine contacts are provided by residues Leu10, Asp87, Val90, 115–116, Leu166, Ala209, and His234; that span reads SI.

Belongs to the diphthine synthase family. In terms of assembly, homodimer.

It catalyses the reaction 2-[(3S)-amino-3-carboxypropyl]-L-histidyl-[translation elongation factor 2] + 3 S-adenosyl-L-methionine = diphthine-[translation elongation factor 2] + 3 S-adenosyl-L-homocysteine + 3 H(+). It functions in the pathway protein modification; peptidyl-diphthamide biosynthesis. S-adenosyl-L-methionine-dependent methyltransferase that catalyzes the trimethylation of the amino group of the modified target histidine residue in translation elongation factor 2 (EF-2), to form an intermediate called diphthine. The three successive methylation reactions represent the second step of diphthamide biosynthesis. In Pyrococcus abyssi (strain GE5 / Orsay), this protein is Diphthine synthase.